Here is a 919-residue protein sequence, read N- to C-terminus: Chaperone protein ClpC2, chloroplastic (919 aa).

A chloroplast-targeting transit peptide spans 1-54; sequence MAGTLLQPVALGTTFAGRVSGQRWKSHGTRRPPSMLAMSLSRPVKMAAFVGLRS. The 143-residue stretch at 89 to 231 folds into the Clp R domain; the sequence is FERFTEKAIK…RTQVIRMIGE (143 aa). 2 repeat regions span residues 92 to 157 and 167 to 231; these read FTEK…IGRG and FTPR…MIGE. The segment at 252–499 is i; the sequence is LEEYGTNLTK…RVRLRHAQVP (248 aa). 297-304 is an ATP binding site; that stretch reads GEPGVGKT. The region spanning 506–541 is the UVR domain; it reads DKELKQITKDKNEAVRSQDFEKAGELRDREMELKAQ. An II region spans residues 566 to 757; it reads VNEADIQHIV…LLIMTSNVGS (192 aa). 640–647 is an ATP binding site; the sequence is GPTGVGKS.

This sequence belongs to the ClpA/ClpB family. ClpC subfamily.

It localises to the plastid. It is found in the chloroplast. Functionally, molecular chaperone that may interact with a ClpP-like protease involved in degradation of denatured proteins in the chloroplast. The sequence is that of Chaperone protein ClpC2, chloroplastic (CLPC2) from Oryza sativa subsp. japonica (Rice).